The following is a 505-amino-acid chain: Lysine--tRNA ligase (505 aa).

Residues Glu-415 and Glu-422 each coordinate Mg(2+).

Belongs to the class-II aminoacyl-tRNA synthetase family. As to quaternary structure, homodimer. The cofactor is Mg(2+).

It is found in the cytoplasm. The enzyme catalyses tRNA(Lys) + L-lysine + ATP = L-lysyl-tRNA(Lys) + AMP + diphosphate. In Pectobacterium carotovorum subsp. carotovorum (strain PC1), this protein is Lysine--tRNA ligase.